The sequence spans 553 residues: Putative transport protein YidE (553 aa).

A run of 5 helical transmembrane segments spans residues 4–24 (IALT…IGNV), 28–48 (GVGL…HFVS), 65–85 (FGLI…FFAS), 95–115 (LFAV…HKLF), and 158–178 (MSYA…MWML). RCK C-terminal domains are found at residues 191–276 (QQHE…VIGQ) and 279–361 (DTSL…VLGN). The next 6 membrane-spanning stretches (helical) occupy residues 371–391 (MLPV…PVFV), 393–413 (GFPA…ALIL), 439–459 (IVLF…HTLV), 464–484 (LSWI…VGIL), 493–513 (YLTM…LAFA), and 533–553 (LVMF…WSIG).

The protein belongs to the AAE transporter (TC 2.A.81) family. YidE subfamily.

Its subcellular location is the cell membrane. This Escherichia coli O127:H6 (strain E2348/69 / EPEC) protein is Putative transport protein YidE.